Consider the following 974-residue polypeptide: Membrane-associated phosphatidylinositol transfer protein 3 (974 aa).

S30, S31, S109, S295, S298, S321, S343, and S495 each carry phosphoserine. Positions 310–347 are disordered; that stretch reads CSLASSKRLSKSNVDVSSGVEDEDPKRPLPRKQSDSST. Polar residues predominate over residues 312–325; the sequence is LASSKRLSKSNVDV. Residues 390–594 form the DDHD domain; the sequence is FDFDVSDFFL…VAFILRQVMR (205 aa). A disordered region spans residues 497–535; the sequence is PLLDAPASPPQAPRFQRTERRLSKGSSHSDSSESSDSLA. Residues 520–533 show a composition bias toward low complexity; that stretch reads KGSSHSDSSESSDS. 4 positions are modified to phosphoserine: S612, S907, S928, and S946. A disordered region spans residues 927 to 974; that stretch reads MSVQQPDPPAANPKPERAQSQPESDKDHERPLPALSWARGPPKFESVP.

Belongs to the PtdIns transfer protein family. PI transfer class IIA subfamily. As to quaternary structure, interacts with PTK2B via its C-terminus.

The protein localises to the endomembrane system. Its function is as follows. Catalyzes the transfer of phosphatidylinositol and phosphatidylcholine between membranes (in vitro). Binds calcium ions. The polypeptide is Membrane-associated phosphatidylinositol transfer protein 3 (Pitpnm3) (Mus musculus (Mouse)).